Here is a 494-residue protein sequence, read N- to C-terminus: Inosine-5'-monophosphate dehydrogenase (494 aa).

2 CBS domains span residues 93–154 (IIRN…NEKI) and 158–217 (MTTD…CKDM). Residues aspartate 251 and 301-303 (GIG) contribute to the NAD(+) site. Positions 303 and 305 each coordinate K(+). An IMP-binding site is contributed by serine 306. Cysteine 308 serves as a coordination point for K(+). Cysteine 308 serves as the catalytic Thioimidate intermediate. Residues 341–343 (DGG), 364–365 (GS), and 388–392 (YRGMG) contribute to the IMP site. Residue arginine 406 is the Proton acceptor of the active site. Glutamate 421 serves as a coordination point for IMP. Residues glutamate 475, serine 476, and histidine 477 each contribute to the K(+) site.

It belongs to the IMPDH/GMPR family. Homotetramer. Requires K(+) as cofactor.

It catalyses the reaction IMP + NAD(+) + H2O = XMP + NADH + H(+). It participates in purine metabolism; XMP biosynthesis via de novo pathway; XMP from IMP: step 1/1. Its activity is regulated as follows. Mycophenolic acid (MPA) is a non-competitive inhibitor that prevents formation of the closed enzyme conformation by binding to the same site as the amobile flap. In contrast, mizoribine monophosphate (MZP) is a competitive inhibitor that induces the closed conformation. MPA is a potent inhibitor of mammalian IMPDHs but a poor inhibitor of the bacterial enzymes. MZP is a more potent inhibitor of bacterial IMPDH. Functionally, catalyzes the conversion of inosine 5'-phosphate (IMP) to xanthosine 5'-phosphate (XMP), the first committed and rate-limiting step in the de novo synthesis of guanine nucleotides, and therefore plays an important role in the regulation of cell growth. This chain is Inosine-5'-monophosphate dehydrogenase, found in Chlorobaculum parvum (strain DSM 263 / NCIMB 8327) (Chlorobium vibrioforme subsp. thiosulfatophilum).